We begin with the raw amino-acid sequence, 198 residues long: DnaJ homolog subfamily C member 12 (198 aa).

At M1 the chain carries N-acetylmethionine. Residues 14–79 (DYYTLLGCDE…ESRARYDHWR (66 aa)) form the J domain. Residues 121–183 (TNTAQNKERS…CGHLHFRWSG (63 aa)) are disordered. Over residues 126–156 (NKERSEQRETKQGDPDSTPEKMMQKESESPE) the composition is skewed to basic and acidic residues. A phosphoserine mark is found at S160, S166, and S182.

As to quaternary structure, interacts with HSPA8. Interacts with TPH1. Interacts with TPH2.

The protein resides in the cytoplasm. In terms of biological role, probable co-chaperone that participates in the proper folding of biopterin-dependent aromatic amino acid hydroxylases, which include phenylalanine-4-hydroxylase (PAH), tyrosine 3-monooxygenase (TH) and peripheral and neuronal tryptophan hydroxylases (TPH1 and TPH2). The chain is DnaJ homolog subfamily C member 12 (Dnajc12) from Rattus norvegicus (Rat).